The primary structure comprises 85 residues: Neurotoxin 60.35 (85 aa).

A signal peptide spans 1 to 23; it reads MKFCVAVSLLIIASMAGVISVSG. The LCN-type CS-alpha/beta domain occupies 24-85; that stretch reads YDVYPRDYAG…NFLSVIWKQC (62 aa). 3 disulfide bridges follow: Cys38-Cys60, Cys46-Cys65, and Cys50-Cys67.

This sequence belongs to the long (3 C-C) scorpion toxin superfamily. In terms of tissue distribution, expressed by the venom gland.

Its subcellular location is the secreted. This chain is Neurotoxin 60.35, found in Lychas mucronatus (Chinese swimming scorpion).